A 442-amino-acid polypeptide reads, in one-letter code: MTAPTAIRRLNAADPDFARHLDHLLSWESVSDDSVNQRVLDIIKAVRERGDAALVEFTQRFDGLQVASMADLILPRERLELALTRITVAQREALEKAAARVRSYHEKQKQDSWTYTEADGTVLGQKVTPLDRAGLYVPGGKASYPSSVLMNAIPAKVAGVTEVVMVVPTPRGEVNELVLAAACIAGVDRVFTIGGAQAVAALAYGTESVPQVDKVVGPGNIYVATAKRHVFGQVGIDMIAGPSEILVVCDGQTDPDWIAMDLFSQAEHDEDAQAILVSPDAEFLDKVAASIAKLLPTMERAEIINTSINGRGALIKVRDMQQAIEVANRIAPEHLELSVADPQAWLPQIRHAGAIFMGRHTSEALGDYCAGPNHVLPTSGTARFSSPLGVYDFQKRSSIIFCSEQGASELGRTASVLARGESLTAHARSAEYRIVDDQDQGQ.

Residues Tyr-136, Gln-197, and Asn-220 each contribute to the NAD(+) site. Residues Ser-243, Gln-265, and His-268 each coordinate substrate. Zn(2+)-binding residues include Gln-265 and His-268. Residues Glu-333 and His-334 each act as proton acceptor in the active site. Substrate contacts are provided by His-334, Asp-367, Glu-421, and His-426. Asp-367 lines the Zn(2+) pocket. His-426 is a Zn(2+) binding site.

It belongs to the histidinol dehydrogenase family. It depends on Zn(2+) as a cofactor.

It catalyses the reaction L-histidinol + 2 NAD(+) + H2O = L-histidine + 2 NADH + 3 H(+). It participates in amino-acid biosynthesis; L-histidine biosynthesis; L-histidine from 5-phospho-alpha-D-ribose 1-diphosphate: step 9/9. In terms of biological role, catalyzes the sequential NAD-dependent oxidations of L-histidinol to L-histidinaldehyde and then to L-histidine. This is Histidinol dehydrogenase from Pseudomonas fluorescens (strain ATCC BAA-477 / NRRL B-23932 / Pf-5).